The primary structure comprises 864 residues: Valine--tRNA ligase (864 aa).

The short motif at 42-52 (PTISGKLHIGH) is the 'HIGH' region element. The short motif at 589-593 (KMSKS) is the 'KMSKS' region element. Lys592 is a binding site for ATP.

Belongs to the class-I aminoacyl-tRNA synthetase family. ValS type 2 subfamily. Monomer.

The protein localises to the cytoplasm. It catalyses the reaction tRNA(Val) + L-valine + ATP = L-valyl-tRNA(Val) + AMP + diphosphate. Its function is as follows. Catalyzes the attachment of valine to tRNA(Val). As ValRS can inadvertently accommodate and process structurally similar amino acids such as threonine, to avoid such errors, it has a 'posttransfer' editing activity that hydrolyzes mischarged Thr-tRNA(Val) in a tRNA-dependent manner. This chain is Valine--tRNA ligase, found in Wolbachia pipientis wMel.